Reading from the N-terminus, the 250-residue chain is AA9 family lytic polysaccharide monooxygenase F (250 aa).

Positions 1–21 are cleaved as a signal peptide; sequence MAMSKIATLAGLLASAGLVAG. Residue H22 coordinates Cu(2+). Residue D51 coordinates O2. 2 disulfides stabilise this stretch: C77–C200 and C121–C125. H107 contacts Cu(2+). The O2 site is built by H186 and Q195. Cu(2+) is bound at residue Y197.

This sequence belongs to the glycosyl hydrolase 61 family. It depends on Cu(2+) as a cofactor.

It localises to the secreted. The catalysed reaction is Endohydrolysis of (1-&gt;4)-beta-D-glucosidic linkages in cellulose, lichenin and cereal beta-D-glucans.. In terms of biological role, lytic polysaccharide monooxygenase (LMPO) that depolymerizes crystalline and amorphous polysaccharides via the oxidation of scissile alpha- or beta-(1-4)-glycosidic bonds, yielding C1 or C4 oxidation products. Catalysis by LPMOs requires the reduction of the active-site copper from Cu(II) to Cu(I) by a reducing agent and H(2)O(2) or O(2) as a cosubstrate. Major secreted component of the extracellular cellulolytic system. This chain is AA9 family lytic polysaccharide monooxygenase F, found in Emericella nidulans (strain FGSC A4 / ATCC 38163 / CBS 112.46 / NRRL 194 / M139) (Aspergillus nidulans).